Here is a 214-residue protein sequence, read N- to C-terminus: Probable transaldolase (214 aa).

Residue Lys83 is the Schiff-base intermediate with substrate of the active site.

This sequence belongs to the transaldolase family. Type 3B subfamily.

The protein localises to the cytoplasm. It catalyses the reaction D-sedoheptulose 7-phosphate + D-glyceraldehyde 3-phosphate = D-erythrose 4-phosphate + beta-D-fructose 6-phosphate. It functions in the pathway carbohydrate degradation; pentose phosphate pathway; D-glyceraldehyde 3-phosphate and beta-D-fructose 6-phosphate from D-ribose 5-phosphate and D-xylulose 5-phosphate (non-oxidative stage): step 2/3. Functionally, transaldolase is important for the balance of metabolites in the pentose-phosphate pathway. The sequence is that of Probable transaldolase from Citrifermentans bemidjiense (strain ATCC BAA-1014 / DSM 16622 / JCM 12645 / Bem) (Geobacter bemidjiensis).